The sequence spans 308 residues: Olfactory receptor 2T7 (308 aa).

Residues 1 to 17 are Extracellular-facing; sequence MPTLSFWVCSATPVSPG. A helical membrane pass occupies residues 18-40; the sequence is FFALILLVFVTSIASNVVKIILI. Topologically, residues 41-51 are cytoplasmic; the sequence is HIDSRLHTPMY. Residues 52–74 traverse the membrane as a helical segment; it reads FLLSQLSLRDILYISTIVPKMLV. Over 75–88 the chain is Extracellular; that stretch reads DQVMSQRAISFAGC. The cysteines at positions 88 and 170 are disulfide-linked. The chain crosses the membrane as a helical span at residues 89–109; the sequence is TAQHFLYLTLAGAEFFLLGLM. Residues 110–130 lie on the Cytoplasmic side of the membrane; it reads SCDRYVAICNPLHYPDLMSRK. The helical transmembrane segment at 131 to 151 threads the bilayer; that stretch reads ICWLIVAAAWLGGSIDGFLLT. Over 152–188 the chain is Extracellular; the sequence is PVTMQFPFCASREINHFFCEVPALLKLSCTDTSAYET. Residues 189–209 traverse the membrane as a helical segment; it reads AMYVCCIMMLLIPFSVISGSY. Residues 210-235 lie on the Cytoplasmic side of the membrane; that stretch reads TRILITVYRMSEAEGRRKAVATCSSH. A helical membrane pass occupies residues 236 to 256; the sequence is MVVVSLFYGAAMYTYVLPHSY. At 257–262 the chain is on the extracellular side; the sequence is HTPEQD. A helical membrane pass occupies residues 263 to 283; it reads KAVSAFYTILTPMLNPLIYSL. Residues 284–308 are Cytoplasmic-facing; the sequence is RNKDVTGALQKVVGRCVSSGKVTTF.

Belongs to the G-protein coupled receptor 1 family.

Its subcellular location is the cell membrane. In terms of biological role, odorant receptor. The sequence is that of Olfactory receptor 2T7 (OR2T7) from Homo sapiens (Human).